The sequence spans 505 residues: Mannosyl-oligosaccharide alpha-1,2-mannosidase 1B (505 aa).

An N-terminal signal peptide occupies residues 1-16; that stretch reads MRTLLALAALAGFAAA. N-linked (GlcNAc...) asparagine glycosylation is found at Asn88 and Asn174. Cysteines 325 and 354 form a disulfide. Asn359 carries an N-linked (GlcNAc...) asparagine glycan. Catalysis depends on Glu368, which acts as the Proton donor. Ca(2+) is bound at residue Thr494.

The protein belongs to the glycosyl hydrolase 47 family. As to quaternary structure, monomer. Ca(2+) serves as cofactor. Requires Mg(2+) as cofactor.

Its subcellular location is the cytoplasmic vesicle lumen. It carries out the reaction N(4)-(alpha-D-Man-(1-&gt;2)-alpha-D-Man-(1-&gt;2)-alpha-D-Man-(1-&gt;3)-[alpha-D-Man-(1-&gt;2)-alpha-D-Man-(1-&gt;3)-[alpha-D-Man-(1-&gt;2)-alpha-D-Man-(1-&gt;6)]-alpha-D-Man-(1-&gt;6)]-beta-D-Man-(1-&gt;4)-beta-D-GlcNAc-(1-&gt;4)-beta-D-GlcNAc)-L-asparaginyl-[protein] (N-glucan mannose isomer 9A1,2,3B1,2,3) + 4 H2O = N(4)-(alpha-D-Man-(1-&gt;3)-[alpha-D-Man-(1-&gt;3)-[alpha-D-Man-(1-&gt;6)]-alpha-D-Man-(1-&gt;6)]-beta-D-Man-(1-&gt;4)-beta-D-GlcNAc-(1-&gt;4)-beta-D-GlcNAc)-L-asparaginyl-[protein] (N-glucan mannose isomer 5A1,2) + 4 beta-D-mannose. It catalyses the reaction N(4)-(alpha-D-Man-(1-&gt;2)-alpha-D-Man-(1-&gt;2)-alpha-D-Man-(1-&gt;3)-[alpha-D-Man-(1-&gt;3)-[alpha-D-Man-(1-&gt;2)-alpha-D-Man-(1-&gt;6)]-alpha-D-Man-(1-&gt;6)]-beta-D-Man-(1-&gt;4)-beta-D-GlcNAc-(1-&gt;4)-beta-D-GlcNAc)-L-asparaginyl-[protein] (N-glucan mannose isomer 8A1,2,3B1,3) + 3 H2O = N(4)-(alpha-D-Man-(1-&gt;3)-[alpha-D-Man-(1-&gt;3)-[alpha-D-Man-(1-&gt;6)]-alpha-D-Man-(1-&gt;6)]-beta-D-Man-(1-&gt;4)-beta-D-GlcNAc-(1-&gt;4)-beta-D-GlcNAc)-L-asparaginyl-[protein] (N-glucan mannose isomer 5A1,2) + 3 beta-D-mannose. The protein operates within protein modification; protein glycosylation. Its function is as follows. Involved in the maturation of Asn-linked oligosaccharides. Progressively trims alpha-1,2-linked mannose residues from Man(9)GlcNAc(2) to produce Man(5)GlcNAc(2). This is Mannosyl-oligosaccharide alpha-1,2-mannosidase 1B (mns1B) from Emericella nidulans (strain FGSC A4 / ATCC 38163 / CBS 112.46 / NRRL 194 / M139) (Aspergillus nidulans).